An 81-amino-acid chain; its full sequence is uncharacterized protein (81 aa).

In terms of tissue distribution, expressed in fetal brain.

This is an uncharacterized protein from Homo sapiens (Human).